Here is a 239-residue protein sequence, read N- to C-terminus: Phosphoribosylaminoimidazole-succinocarboxamide synthase (239 aa).

The protein belongs to the SAICAR synthetase family.

The enzyme catalyses 5-amino-1-(5-phospho-D-ribosyl)imidazole-4-carboxylate + L-aspartate + ATP = (2S)-2-[5-amino-1-(5-phospho-beta-D-ribosyl)imidazole-4-carboxamido]succinate + ADP + phosphate + 2 H(+). Its pathway is purine metabolism; IMP biosynthesis via de novo pathway; 5-amino-1-(5-phospho-D-ribosyl)imidazole-4-carboxamide from 5-amino-1-(5-phospho-D-ribosyl)imidazole-4-carboxylate: step 1/2. This Bacillus cereus (strain AH187) protein is Phosphoribosylaminoimidazole-succinocarboxamide synthase.